Reading from the N-terminus, the 726-residue chain is MASVMSNNNNNNNNNNASYMFTNPLSNTGGGLINEIKDAINEMEQLKVLELKQICKSLDLSITGKKAVLQDRIKQFLRKSCDIGHIDPWRPKAIKILIAKVRINSSLPKYSTLWETLKTGAFKHPVASGQLPVTALQSTALPPYSQQQALAYSFTSPFYKPIVQIPDANKKLKQSAGRGCTKMKFKVSKSNHDLLKSNKSYKLYLFSGFSIPFIYETVGHEAIDFPYPCELVFNGTKLEDNVKGLKKQNGTGNPANLTPYLKVPTEMNHLDLHYLNIDKEYSISCFIVEVFSPEALLGKILKRPKIIKQATTAYIKRTLNEQDDDDIITTSTVLSLQCPISCTRMKYPAKTDQCKHIQCFDALWFLHSQSQVPTWQCPICQHPIKFDQLKISEFVDNIIQNCNEDVEQVEISVDGSWKPIHNSSAVITDTVNQNHSVKNENQGTVKQEQDYDSRNAFDTNLRNGSNHNEPEIISLDSSDDEAFIPASKSFPTHVNPRNDQLRADIFPSESEGSSDYNPNHTSTPKGSPTMDQDNYQDAFQMRSFLNQGATTNINDTPTNNSSINSFVTATNGDSRIFYNRGPSTPLLPAVLQNLTNQTEAQRNPYGPNYNTTAQDRNLLGIEGDLPPIPPVDPNSEAETELPTRTTSAAHLPPYIHVSTSGHGDDGKIRKRRHSNVSIYIPKNPYATLMKRRPQANHAIMNKTLAQTNDFNTSAQDNSEVVDLTSD.

An SAP domain is found at 43 to 77 (MEQLKVLELKQICKSLDLSITGKKAVLQDRIKQFL). The PINIT domain maps to 139 to 291 (TALPPYSQQQ…SISCFIVEVF (153 aa)). Residues 323–408 (DDDDIITTST…IQNCNEDVEQ (86 aa)) form an SP-RING-type zinc finger. Zn(2+) is bound by residues cysteine 354, histidine 356, cysteine 377, and cysteine 380. The interval 507-533 (PSESEGSSDYNPNHTSTPKGSPTMDQD) is disordered. The segment covering 510–533 (SEGSSDYNPNHTSTPKGSPTMDQD) has biased composition (polar residues).

It belongs to the PIAS family. As to quaternary structure, interacts with CDC12. In terms of processing, autosumoylated upon ethanol stress.

The protein resides in the nucleus. It participates in protein modification; protein sumoylation. May act as an E3 ligase mediating SUMO/Smt3 attachment to septins. May be involved in chromosome maintenance. The polypeptide is E3 SUMO-protein ligase SIZ2 (NFI1) (Saccharomyces cerevisiae (strain ATCC 204508 / S288c) (Baker's yeast)).